The following is a 469-amino-acid chain: Aspartyl/glutamyl-tRNA(Asn/Gln) amidotransferase subunit B (469 aa).

The protein belongs to the GatB/GatE family. GatB subfamily. As to quaternary structure, heterotrimer of A, B and C subunits.

The catalysed reaction is L-glutamyl-tRNA(Gln) + L-glutamine + ATP + H2O = L-glutaminyl-tRNA(Gln) + L-glutamate + ADP + phosphate + H(+). The enzyme catalyses L-aspartyl-tRNA(Asn) + L-glutamine + ATP + H2O = L-asparaginyl-tRNA(Asn) + L-glutamate + ADP + phosphate + 2 H(+). Functionally, allows the formation of correctly charged Asn-tRNA(Asn) or Gln-tRNA(Gln) through the transamidation of misacylated Asp-tRNA(Asn) or Glu-tRNA(Gln) in organisms which lack either or both of asparaginyl-tRNA or glutaminyl-tRNA synthetases. The reaction takes place in the presence of glutamine and ATP through an activated phospho-Asp-tRNA(Asn) or phospho-Glu-tRNA(Gln). This chain is Aspartyl/glutamyl-tRNA(Asn/Gln) amidotransferase subunit B, found in Methanococcus vannielii (strain ATCC 35089 / DSM 1224 / JCM 13029 / OCM 148 / SB).